Consider the following 373-residue polypeptide: Citrate synthase (373 aa).

Active-site residues include His-262 and Asp-314.

The protein belongs to the citrate synthase family. As to quaternary structure, homohexamer.

The catalysed reaction is oxaloacetate + acetyl-CoA + H2O = citrate + CoA + H(+). It functions in the pathway carbohydrate metabolism; tricarboxylic acid cycle; isocitrate from oxaloacetate: step 1/2. The sequence is that of Citrate synthase (ctsA) from Heyndrickxia coagulans (Weizmannia coagulans).